We begin with the raw amino-acid sequence, 567 residues long: DNA-binding protein REPIN1 (567 aa).

The interval Pro17–Ala52 is disordered. Residues Gly22 to Ala50 are compositionally biased toward polar residues. At Ser27 the chain carries Phosphoserine. The residue at position 30 (Thr30) is a Phosphothreonine. Lys33 carries the N6-acetyllysine modification. The C2H2-type 1; atypical zinc finger occupies His57 to Cys79. 7 consecutive C2H2-type zinc fingers follow at residues Leu85–His107, Phe116–His138, Ile145–His168, Phe177–His199, Phe236–His258, His264–His286, and Tyr292–His314. Residue Lys276 is modified to N6-acetyllysine. The segment covering Pro305–Lys315 has biased composition (basic residues). Residues Pro305–Pro372 are disordered. The segment covering Pro345–Glu362 has biased composition (pro residues). C2H2-type zinc fingers lie at residues Tyr375–His397, Phe403–His425, Phe431–His453, Phe459–His481, Tyr487–His509, Tyr515–His537, and Phe543–His565.

Homodimers and homomultimers. Found in a complex with RIP60 and RIP100. Expressed in adipose tissue and bone tissue.

It is found in the nucleus. It localises to the cytoplasm. The protein localises to the cytosol. In terms of biological role, sequence-specific double-stranded DNA-binding protein. Binds ATT-rich and T-rich DNA sequences and facilitates DNA bending. May regulate the expression of genes involved in cellular fatty acid import, including SCARB1/CD36, and genes involved in lipid droplet formation. May regulate the expression of LCN2, and thereby influence iron metabolism and apoptosis-related pathways. May regulate the expression of genes involved in glucose transport. In Homo sapiens (Human), this protein is DNA-binding protein REPIN1 (REPIN1).